Reading from the N-terminus, the 376-residue chain is N-acetyldiaminopimelate deacetylase (376 aa).

Asp69 is a catalytic residue. The active-site Proton acceptor is the Glu128.

It belongs to the peptidase M20A family. N-acetyldiaminopimelate deacetylase subfamily.

The enzyme catalyses N-acetyl-(2S,6S)-2,6-diaminopimelate + H2O = (2S,6S)-2,6-diaminopimelate + acetate. The protein operates within amino-acid biosynthesis; L-lysine biosynthesis via DAP pathway; LL-2,6-diaminopimelate from (S)-tetrahydrodipicolinate (acetylase route): step 3/3. In terms of biological role, catalyzes the conversion of N-acetyl-diaminopimelate to diaminopimelate and acetate. This chain is N-acetyldiaminopimelate deacetylase, found in Bacillus mycoides (strain KBAB4) (Bacillus weihenstephanensis).